Here is a 442-residue protein sequence, read N- to C-terminus: Trigger factor (442 aa).

The PPIase FKBP-type domain occupies 165–250 (DDRVIIDFEG…LQKVMAPELP (86 aa)).

Belongs to the FKBP-type PPIase family. Tig subfamily.

Its subcellular location is the cytoplasm. It catalyses the reaction [protein]-peptidylproline (omega=180) = [protein]-peptidylproline (omega=0). In terms of biological role, involved in protein export. Acts as a chaperone by maintaining the newly synthesized protein in an open conformation. Functions as a peptidyl-prolyl cis-trans isomerase. The chain is Trigger factor from Coxiella burnetii (strain RSA 493 / Nine Mile phase I).